The sequence spans 469 residues: UDP-N-acetylmuramate--L-alanine ligase (469 aa).

119–125 (GTHGKTT) lines the ATP pocket.

It belongs to the MurCDEF family.

Its subcellular location is the cytoplasm. The catalysed reaction is UDP-N-acetyl-alpha-D-muramate + L-alanine + ATP = UDP-N-acetyl-alpha-D-muramoyl-L-alanine + ADP + phosphate + H(+). Its pathway is cell wall biogenesis; peptidoglycan biosynthesis. Cell wall formation. The chain is UDP-N-acetylmuramate--L-alanine ligase from Vesicomyosocius okutanii subsp. Calyptogena okutanii (strain HA).